Consider the following 163-residue polypeptide: 3-dehydroquinate dehydratase (163 aa).

The Proton acceptor role is filled by Tyr-28. Residues Asn-80, His-86, and Asp-93 each contribute to the substrate site. His-106 serves as the catalytic Proton donor. Residues Ile-107–Ser-108 and Arg-117 contribute to the substrate site.

This sequence belongs to the type-II 3-dehydroquinase family. Homododecamer.

The catalysed reaction is 3-dehydroquinate = 3-dehydroshikimate + H2O. It participates in metabolic intermediate biosynthesis; chorismate biosynthesis; chorismate from D-erythrose 4-phosphate and phosphoenolpyruvate: step 3/7. Catalyzes a trans-dehydration via an enolate intermediate. The chain is 3-dehydroquinate dehydratase from Bradyrhizobium sp. (strain BTAi1 / ATCC BAA-1182).